We begin with the raw amino-acid sequence, 191 residues long: Casparian strip membrane protein 4 (191 aa).

Over 1–27 (MKTGSVEAGEQASEDATPRRGKKLNRG) the chain is Cytoplasmic. A helical membrane pass occupies residues 28–48 (ILILDLVLRVFGAICTLGSAV). Residues 49–72 (AMGTTSQTLPSSSQFFRFRAKYND) are Extracellular-facing. A helical membrane pass occupies residues 73 to 93 (LPMFMFFAIANSIVCAYLVLS). Over 94–110 (LRLSIFHIIRSAGIITR) the chain is Cytoplasmic. A helical transmembrane segment spans residues 111 to 131 (IILVTFDMVMLVLLTCGASAA). Residues 132 to 160 (TSIVYLAHKGNASANWLPFCVRFSHFCNR) are Extracellular-facing. N-linked (GlcNAc...) asparagine glycosylation occurs at asparagine 142. The chain crosses the membrane as a helical span at residues 161-181 (ISGSLIGSFFSIIIFMLLVIL). Residues 182–191 (SAVSQFSICN) are Cytoplasmic-facing.

This sequence belongs to the Casparian strip membrane proteins (CASP) family. Homodimer and heterodimers.

Its subcellular location is the cell membrane. In terms of biological role, regulates membrane-cell wall junctions and localized cell wall deposition. Required for establishment of the Casparian strip membrane domain (CSD) and the subsequent formation of Casparian strips, a cell wall modification of the root endodermis that determines an apoplastic barrier between the intraorganismal apoplasm and the extraorganismal apoplasm and prevents lateral diffusion. This is Casparian strip membrane protein 4 from Ricinus communis (Castor bean).